A 486-amino-acid polypeptide reads, in one-letter code: Differentially expressed in FDCP 8 homolog (486 aa).

The disordered stretch occupies residues 1–26 (MSSWCSSEDAHNQSSTPSTRSRKSSW). 2 Phorbol-ester/DAG-type zinc fingers span residues 160–212 (GHEF…KRVC) and 393–459 (IHTV…SLNC).

Belongs to the DEF8 family.

The protein is Differentially expressed in FDCP 8 homolog of Caenorhabditis elegans.